The sequence spans 295 residues: uncharacterized protein (295 aa).

The signal sequence occupies residues 1-19 (MFKKYIFILILFIASIARA). The interval 275-295 (RNNPPLKNNNAKGKNPYDTNK) is disordered. Positions 276 to 295 (NNPPLKNNNAKGKNPYDTNK) are enriched in low complexity.

This is an uncharacterized protein from Rickettsia conorii (strain ATCC VR-613 / Malish 7).